Reading from the N-terminus, the 463-residue chain is Ribulose bisphosphate carboxylase large chain (463 aa).

Position 5 is an N6,N6,N6-trimethyllysine (lysine 5). Residues asparagine 114 and threonine 164 each coordinate substrate. Residue lysine 166 is the Proton acceptor of the active site. A substrate-binding site is contributed by lysine 168. Positions 192, 194, and 195 each coordinate Mg(2+). Lysine 192 bears the N6-carboxylysine mark. Residue histidine 285 is the Proton acceptor of the active site. The substrate site is built by arginine 286, histidine 318, and serine 370.

Belongs to the RuBisCO large chain family. Type I subfamily. Heterohexadecamer of 8 large chains and 8 small chains; disulfide-linked. The disulfide link is formed within the large subunit homodimers. It depends on Mg(2+) as a cofactor. Post-translationally, the disulfide bond which can form in the large chain dimeric partners within the hexadecamer appears to be associated with oxidative stress and protein turnover.

It is found in the plastid. The protein localises to the chloroplast. It carries out the reaction 2 (2R)-3-phosphoglycerate + 2 H(+) = D-ribulose 1,5-bisphosphate + CO2 + H2O. The enzyme catalyses D-ribulose 1,5-bisphosphate + O2 = 2-phosphoglycolate + (2R)-3-phosphoglycerate + 2 H(+). In terms of biological role, ruBisCO catalyzes two reactions: the carboxylation of D-ribulose 1,5-bisphosphate, the primary event in carbon dioxide fixation, as well as the oxidative fragmentation of the pentose substrate in the photorespiration process. Both reactions occur simultaneously and in competition at the same active site. This is Ribulose bisphosphate carboxylase large chain from Pelargonium grandiflorum (Geranium).